The sequence spans 461 residues: MKILFVEPAIFLSAFAMTLTGPLTTQYVYRRIWEETGNYTFSSDSNISECEKNKSSPIFAFQEEVQKKVSRFNLQMDISGLIPGLVSTFILLSISDHYGRKFPMILSSVGALATSVWLCLLCYFAFPFQLLIASTFIGAFCGNYTTFWGACFAYIVDQCKEHKQKTIRIAIIDFLLGLVTGLTGLSSGYFIRELGFEWSFLIIAVSLAVNLIYILFFLGDPVKECSSQNVTMSCSEGFKNLFYRTYMLFKNASGKRRFLLCLLLFTVITYFFVVIGIAPIFILYELDSPLCWNEVFIGYGSALGSASFLTSFLGIWLFSYCMEDIHMAFIGIFTTMTGMAMTAFASTTLMMFLARVPFLFTIVPFSVLRSMLSKVVRSTEQGTLFACIAFLETLGGVTAVSTFNGIYSATVAWYPGFTFLLSAGLLLLPAISLCVVKCTSWNEGSYELLIQEESSEDASDR.

The signal sequence occupies residues 1–25 (MKILFVEPAIFLSAFAMTLTGPLTT). Over 26–73 (QYVYRRIWEETGNYTFSSDSNISECEKNKSSPIFAFQEEVQKKVSRFN) the chain is Extracellular. Asparagine 38, asparagine 46, and asparagine 53 each carry an N-linked (GlcNAc...) asparagine glycan. Residues 74–94 (LQMDISGLIPGLVSTFILLSI) traverse the membrane as a helical segment. Residues 95–101 (SDHYGRK) are Cytoplasmic-facing. Residues 102-124 (FPMILSSVGALATSVWLCLLCYF) traverse the membrane as a helical segment. Residues 125 to 133 (AFPFQLLIA) are Extracellular-facing. Residues 134–156 (STFIGAFCGNYTTFWGACFAYIV) traverse the membrane as a helical segment. The Cytoplasmic segment spans residues 157-170 (DQCKEHKQKTIRIA). The chain crosses the membrane as a helical span at residues 171 to 191 (IIDFLLGLVTGLTGLSSGYFI). Residues 192–197 (RELGFE) are Extracellular-facing. The helical transmembrane segment at 198–218 (WSFLIIAVSLAVNLIYILFFL) threads the bilayer. The Cytoplasmic portion of the chain corresponds to 219 to 261 (GDPVKECSSQNVTMSCSEGFKNLFYRTYMLFKNASGKRRFLLC). Residues 262 to 282 (LLLFTVITYFFVVIGIAPIFI) traverse the membrane as a helical segment. At 283–294 (LYELDSPLCWNE) the chain is on the extracellular side. Residues 295–315 (VFIGYGSALGSASFLTSFLGI) form a helical membrane-spanning segment. Over 316–324 (WLFSYCMED) the chain is Cytoplasmic. Residues 325–345 (IHMAFIGIFTTMTGMAMTAFA) traverse the membrane as a helical segment. The Extracellular portion of the chain corresponds to 346–347 (ST). A helical transmembrane segment spans residues 348–368 (TLMMFLARVPFLFTIVPFSVL). Over 369-382 (RSMLSKVVRSTEQG) the chain is Cytoplasmic. The chain crosses the membrane as a helical span at residues 383–403 (TLFACIAFLETLGGVTAVSTF). Topologically, residues 404–415 (NGIYSATVAWYP) are extracellular. A helical membrane pass occupies residues 416-436 (GFTFLLSAGLLLLPAISLCVV). Residues 437 to 461 (KCTSWNEGSYELLIQEESSEDASDR) are Cytoplasmic-facing. A Tyrosine-based lysosomal-sorting motif motif is present at residues 446-449 (YELL).

It belongs to the major facilitator superfamily. SLC46A family.

It is found in the lysosome membrane. The enzyme catalyses estrone 3-sulfate(out) + n H(+)(out) = estrone 3-sulfate(in) + n H(+)(in). The catalysed reaction is 25-hydroxyvitamin D3 sulfate(out) + n H(+)(out) = 25-hydroxyvitamin D3 sulfate(in) + n H(+)(in). It catalyses the reaction cholate(out) + n H(+)(out) = cholate(in) + n H(+)(in). It carries out the reaction glycocholate(out) + n H(+)(out) = glycocholate(in) + n H(+)(in). The enzyme catalyses taurocholate(out) + n H(+)(out) = taurocholate(in) + n H(+)(in). The catalysed reaction is dehydroepiandrosterone 3-sulfate(out) + n H(+)(out) = dehydroepiandrosterone 3-sulfate(in) + n H(+)(in). It catalyses the reaction N-acetyl-D-muramoyl-L-alanyl-D-isoglutamine(out) + n H(+)(out) = N-acetyl-D-muramoyl-L-alanyl-D-isoglutamine(in) + n H(+)(in). It carries out the reaction 2',3'-cGAMP(out) + n H(+)(out) = 2',3'-cGAMP(in) + n H(+)(in). Functionally, lysosomal proton-coupled steroid conjugate and bile acid transporter. Preferentially recognizes lipophilic steroid conjugates or bile acis as endogenous substrates and seems to mediate escape from lysosomes to the cytoplasm. Modulates hepatic cytosolic copper homeostasis, maybe acting as a lysosomal copper transporter and sequestering copper ions in the lysosome. Transports catabolites of non-cleavable antibody-drug conjugates from the lysosome to the cytoplasm. Delivers pathogen-associated molecular patterns to cytosolic pattern recognition receptors as part of the innate immune response to microbes. Selectively transports bacterial muramyl dipeptide (MDP) into the cytosol for recognition by NOD2, triggering inflammatory responses. Likely acts as a redundant importer of cyclic GMP-AMP dinucleotides (cGAMPs) in monocyte and macrophage cell lineages. The transport mechanism, its electrogenicity and stoichiometry remain to be elucidated. The sequence is that of Lysosomal proton-coupled steroid conjugate and bile acid symporter SLC46A3 from Homo sapiens (Human).